A 473-amino-acid polypeptide reads, in one-letter code: Aspartyl/glutamyl-tRNA(Asn/Gln) amidotransferase subunit B (473 aa).

Belongs to the GatB/GatE family. GatB subfamily. Heterotrimer of A, B and C subunits.

It catalyses the reaction L-glutamyl-tRNA(Gln) + L-glutamine + ATP + H2O = L-glutaminyl-tRNA(Gln) + L-glutamate + ADP + phosphate + H(+). The catalysed reaction is L-aspartyl-tRNA(Asn) + L-glutamine + ATP + H2O = L-asparaginyl-tRNA(Asn) + L-glutamate + ADP + phosphate + 2 H(+). Functionally, allows the formation of correctly charged Asn-tRNA(Asn) or Gln-tRNA(Gln) through the transamidation of misacylated Asp-tRNA(Asn) or Glu-tRNA(Gln) in organisms which lack either or both of asparaginyl-tRNA or glutaminyl-tRNA synthetases. The reaction takes place in the presence of glutamine and ATP through an activated phospho-Asp-tRNA(Asn) or phospho-Glu-tRNA(Gln). The chain is Aspartyl/glutamyl-tRNA(Asn/Gln) amidotransferase subunit B from Mycoplasmopsis synoviae (strain 53) (Mycoplasma synoviae).